The following is an 89-amino-acid chain: uncharacterized protein (89 aa).

This is an uncharacterized protein from Escherichia coli (strain K12).